The chain runs to 300 residues: GTPase Era (300 aa).

An Era-type G domain is found at 5–176 (RSGFVCLIGR…IDVLAAALPP (172 aa)). Positions 13-20 (GRPNTGKS) are G1. 13 to 20 (GRPNTGKS) is a GTP binding site. A G2 region spans residues 39–43 (QTTRH). The G3 stretch occupies residues 61–64 (DTPG). GTP contacts are provided by residues 61 to 65 (DTPGL) and 125 to 128 (TKID). A G4 region spans residues 125 to 128 (TKID). The tract at residues 155-157 (VSA) is G5. Residues 207–286 (VHDELPHSLA…YLDLHVNVAK (80 aa)) form the KH type-2 domain.

This sequence belongs to the TRAFAC class TrmE-Era-EngA-EngB-Septin-like GTPase superfamily. Era GTPase family. As to quaternary structure, monomer.

The protein resides in the cell envelope. It is found in the secreted. The protein localises to the cell wall. Functionally, exhibits GTPase activity. Binds RNA but is probably not involved in ribosome assembly in mycobacteria. The chain is GTPase Era from Mycobacterium leprae (strain TN).